A 487-amino-acid polypeptide reads, in one-letter code: Glutamyl-tRNA(Gln) amidotransferase subunit A (487 aa).

Active-site charge relay system residues include Lys-79 and Ser-154. Ser-178 acts as the Acyl-ester intermediate in catalysis.

The protein belongs to the amidase family. GatA subfamily. Heterotrimer of A, B and C subunits.

It catalyses the reaction L-glutamyl-tRNA(Gln) + L-glutamine + ATP + H2O = L-glutaminyl-tRNA(Gln) + L-glutamate + ADP + phosphate + H(+). In terms of biological role, allows the formation of correctly charged Gln-tRNA(Gln) through the transamidation of misacylated Glu-tRNA(Gln) in organisms which lack glutaminyl-tRNA synthetase. The reaction takes place in the presence of glutamine and ATP through an activated gamma-phospho-Glu-tRNA(Gln). This Moorella thermoacetica (strain ATCC 39073 / JCM 9320) protein is Glutamyl-tRNA(Gln) amidotransferase subunit A.